Reading from the N-terminus, the 930-residue chain is Translation initiation factor IF-2 (930 aa).

Positions 31–317 (FVKSASSTVE…RKSKRAKRAE (287 aa)) are disordered. Residues 61–78 (PAAGASNGAPAKPSAPGA) show a composition bias toward low complexity. 2 stretches are compositionally biased toward pro residues: residues 79–99 (RPGPRPGPPAPAQPKEPPAPA) and 108–120 (PAAPAPPAAPPAP). Residues 121 to 135 (AASAAPPSAPEAPSA) show a composition bias toward low complexity. Pro residues-rich tracts occupy residues 136-158 (RPTPGPRPGPGGPKPGAPKPAPR) and 178-192 (PRPQGPAGPGGPRPG). The span at 193-205 (PGAGGPRPGGGPR) shows a compositional bias: gly residues. The segment covering 212 to 242 (NMPPRPVGGPRPGGGPRPGGGPRPGAGPRPT) has biased composition (pro residues). Positions 244–301 (GGAGRPGGGGGGNYRGGGAGGGGGAGGAAAGGFRGRPGGGGGRPGQRGGAAGAFGRPG) are enriched in gly residues. Positions 305-314 (KRGRKSKRAK) are enriched in basic residues. Positions 426–598 (FRPPVVTVMG…VVLTADASLD (173 aa)) constitute a tr-type G domain. Residues 435–442 (GHVDHGKT) form a G1 region. GTP is bound at residue 435 to 442 (GHVDHGKT). The interval 460 to 464 (GITQH) is G2. The G3 stretch occupies residues 485–488 (DTPG). Residues 485 to 489 (DTPGH) and 539 to 542 (NKID) contribute to the GTP site. The tract at residues 539–542 (NKID) is G4. Residues 575 to 577 (SAK) are G5.

The protein belongs to the TRAFAC class translation factor GTPase superfamily. Classic translation factor GTPase family. IF-2 subfamily.

The protein resides in the cytoplasm. Functionally, one of the essential components for the initiation of protein synthesis. Protects formylmethionyl-tRNA from spontaneous hydrolysis and promotes its binding to the 30S ribosomal subunits. Also involved in the hydrolysis of GTP during the formation of the 70S ribosomal complex. This Mycolicibacterium gilvum (strain PYR-GCK) (Mycobacterium gilvum (strain PYR-GCK)) protein is Translation initiation factor IF-2.